A 304-amino-acid polypeptide reads, in one-letter code: D-alanine--D-alanine ligase (304 aa).

One can recognise an ATP-grasp domain in the interval 103–299; sequence KLIWQALGLP…FADLCIEILK (197 aa). Residue 129 to 184 participates in ATP binding; that stretch reads EEKLGLPMFVKPAAEGSSVGVVKVKGKGRLKSVYEELKHLQGEIIAERFIGGGEYS. Mg(2+)-binding residues include Asp253, Glu266, and Asn268.

Belongs to the D-alanine--D-alanine ligase family. Requires Mg(2+) as cofactor. The cofactor is Mn(2+).

It localises to the cytoplasm. The catalysed reaction is 2 D-alanine + ATP = D-alanyl-D-alanine + ADP + phosphate + H(+). It participates in cell wall biogenesis; peptidoglycan biosynthesis. Cell wall formation. The protein is D-alanine--D-alanine ligase of Neisseria meningitidis serogroup C / serotype 2a (strain ATCC 700532 / DSM 15464 / FAM18).